Reading from the N-terminus, the 650-residue chain is Amyloid beta precursor like protein 1 (650 aa).

The N-terminal stretch at 1 to 38 (MGPASPAARGLSRRPGQPPLPLLLPLLLLLLRAQPAIG) is a signal peptide. The Extracellular segment spans residues 39 to 580 (SLAGGSPGAA…APAGTGVSRE (542 aa)). The interval 50–146 (APGSAQVAGL…PFRCLPGEFV (97 aa)) is GFLD subdomain. The 163-residue stretch at 50–212 (APGSAQVAGL…RGVEYVCCPP (163 aa)) folds into the E1 domain. 6 disulfide bridges follow: Cys-60/Cys-84, Cys-95/Cys-140, Cys-120/Cys-128, Cys-156/Cys-210, Cys-167/Cys-197, and Cys-181/Cys-209. Residues 154-212 (EGCRFLHQERMDQCESSTRRHQEAQEACSSQGLILHGSGMLLPCGSDRFRGVEYVCCPP) form a cuBD subdomain region. His-174 serves as a coordination point for Cu(2+). Positions 206, 209, and 210 each coordinate Zn(2+). The disordered stretch occupies residues 214 to 287 (GTPDPSGTAV…LAVVGKVTPT (74 aa)). An O-linked (GalNAc...) threonine glycan is attached at Thr-215. An O-linked (GalNAc...) serine glycan is attached at Ser-227. Thr-228 is a glycosylation site (O-linked (GalNAc...) threonine). The tract at residues 285–305 (TPTPRPTDGVDIYFGMPGEIS) is O-glycosylated at three sites. One can recognise an E2 domain in the interval 293–484 (GVDIYFGMPG…QELRPQIQEL (192 aa)). Heparin-binding regions lie at residues 310-342 (FLRAKMDLEERRMRQINEVMREWAMADNQSKNL) and 410-441 (LLALRRYLRAEQKEQRHTLRHYQHVAAVDPEK). N-linked (GlcNAc...) asparagine glycosylation is present at Asn-337. The segment at 442–459 (AQQMRFQVHTHLQVIEER) is collagen-binding. N-linked (GlcNAc...) asparagine glycosylation occurs at Asn-461. Residues 492-546 (PSELEAPAPGGSSEDKGGLQPPDSKDDTPMTLPKGSTEQDAASPEKEKMNPLEQY) form a disordered region. 2 stretches are compositionally biased toward basic and acidic residues: residues 504–519 (SEDKGGLQPPDSKDDT) and 534–546 (SPEKEKMNPLEQY). Residue Asn-551 is glycosylated (N-linked (GlcNAc...) asparagine). His-561 contacts Cu(2+). His-561 serves as a coordination point for Zn(2+). The helical transmembrane segment at 581-603 (AVSGLLIMGAGGGSLIVLSMLLL) threads the bilayer. The Basolateral sorting signal motif lies at 604–615 (RRKKPYGAISHG). Topologically, residues 604 to 650 (RRKKPYGAISHGVVEVDPMLTLEEQQLRELQRHGYENPTYRFLEERP) are cytoplasmic. An interaction with DAB1 region spans residues 632 to 649 (ELQRHGYENPTYRFLEER). The interval 636 to 650 (HGYENPTYRFLEERP) is interaction with DAB2. Residues 640–643 (NPTY) carry the Clathrin-binding motif. An NPXY motif; contains endocytosis signal motif is present at residues 640 to 643 (NPTY).

This sequence belongs to the APP family. Monomer and homodimer. Heparin binding promotes homodimerization. Binds, via its C-terminus, to the PID domain of several cytoplasmic proteins, including APBB and APBA family members, MAPK8IP1 and DAB1. Binding to Dab1 inhibits its serine phosphorylation. Interacts with CPEB1. Interacts (via NPXY motif) with DAB2 (via PID domain); the interaction is impaired by tyrosine phosphorylation of the NPXY motif. Interacts (via NPXY motif) with DAB1. Proteolytically cleaved by caspases during neuronal apoptosis. Cleaved, in vitro, at Asp-620 by caspase-3. Post-translationally, N- and O-glycosylated. O-glycosylation with core 1 or possibly core 8 glycans. Glycosylation on Ser-227 is the preferred site to Thr-228. Expressed in the cerebral cortex where it is localized to the postsynaptic density (PSD).

It localises to the cell membrane. The protein resides in the cytoplasm. May play a role in postsynaptic function. The C-terminal gamma-secretase processed fragment, ALID1, activates transcription activation through APBB1 (Fe65) binding. Couples to JIP signal transduction through C-terminal binding. May interact with cellular G-protein signaling pathways. Can regulate neurite outgrowth through binding to components of the extracellular matrix such as heparin and collagen I. Its function is as follows. The gamma-CTF peptide, C30, is a potent enhancer of neuronal apoptosis. The polypeptide is Amyloid beta precursor like protein 1 (APLP1) (Homo sapiens (Human)).